A 258-amino-acid polypeptide reads, in one-letter code: Axonemal dynein light intermediate polypeptide 1 (258 aa).

2 disordered regions span residues 19–60 and 207–231; these read RNTE…CVPD and VNEQ…EEKK. The segment covering 34–48 has biased composition (low complexity); sequence SPQQPGPSGSAPQLP. Residues 176 to 255 adopt a coiled-coil conformation; that stretch reads MRKALQAEQG…LKAQLEGIIA (80 aa).

This sequence belongs to the inner dynein arm light chain family. As to quaternary structure, interacts with CFAP45. Interacts with DYNC1H1.

It localises to the cell projection. Its subcellular location is the cilium. The protein resides in the flagellum. It is found in the dynein axonemal particle. The protein localises to the cytoplasm. In terms of biological role, involved in sperm flagellum assembly. The chain is Axonemal dynein light intermediate polypeptide 1 (DNALI1) from Macaca fascicularis (Crab-eating macaque).